The following is a 250-amino-acid chain: 5-oxoprolinase subunit A (250 aa).

It belongs to the LamB/PxpA family. Forms a complex composed of PxpA, PxpB and PxpC.

The catalysed reaction is 5-oxo-L-proline + ATP + 2 H2O = L-glutamate + ADP + phosphate + H(+). In terms of biological role, catalyzes the cleavage of 5-oxoproline to form L-glutamate coupled to the hydrolysis of ATP to ADP and inorganic phosphate. In Streptomyces griseus subsp. griseus (strain JCM 4626 / CBS 651.72 / NBRC 13350 / KCC S-0626 / ISP 5235), this protein is 5-oxoprolinase subunit A.